The sequence spans 323 residues: MTDECVTRNYGVGIRSPNGSENRGSFIMADNTDAKGCTPESLVVGGATAASPLPANKFVARMPVERYASEYNMSHKHRGVALIFNHEFFDIPSLKSRTGTNVDAQELKKAFENLGFAVSVHKDCKLRDILKHVGKAAELDHTDNDCLAVAILSHGEHGYLYAKDTQYKLDNIWHYFTATFCPSLAGKPKLFFIQACQGDRLDGGITLEKGVTETDGESSTSYKIPIHADFLFSYSTIPGYFSWRNINNGSWYMQSLIRELNANGKKYDLLTLLTFVNQRVALDFESNVPATPMMDRQKQIPCLTSMLTRILRFGDKPNGNKAG.

Positions 1-33 (MTDECVTRNYGVGIRSPNGSENRGSFIMADNTD) are excised as a propeptide. Residues His-154 and Cys-196 contribute to the active site. Positions 203 to 215 (GGITLEKGVTETD) are excised as a propeptide.

It belongs to the peptidase C14A family. As to quaternary structure, heterotetramer that consists of two anti-parallel arranged heterodimers, each one formed by a 22 kDa (p22) and a 13 kDa (p13) subunit.

Functionally, involved in the activation cascade of caspases responsible for apoptosis execution. Proteolytically cleaves poly(ADP-ribose) polymerase (PARP). Loss of zygotic DCP-1 function causes larval lethality and melanotic tumors. The chain is Caspase-1 (Dcp-1) from Drosophila melanogaster (Fruit fly).